Reading from the N-terminus, the 314-residue chain is 2,3-dihydroxyphenylpropionate/2,3-dihydroxicinnamic acid 1,2-dioxygenase 1 (314 aa).

The active-site Proton donor is the histidine 115. The Proton acceptor role is filled by histidine 179.

Belongs to the LigB/MhpB extradiol dioxygenase family. In terms of assembly, homotetramer. Fe(2+) is required as a cofactor.

It catalyses the reaction 3-(2,3-dihydroxyphenyl)propanoate + O2 = (2Z,4E)-2-hydroxy-6-oxonona-2,4-dienedioate + H(+). It carries out the reaction (2E)-3-(2,3-dihydroxyphenyl)prop-2-enoate + O2 = (2Z,4E,7E)-2-hydroxy-6-oxonona-2,4,7-trienedioate + H(+). Its pathway is aromatic compound metabolism; 3-phenylpropanoate degradation. Catalyzes the non-heme iron(II)-dependent oxidative cleavage of 2,3-dihydroxyphenylpropionic acid and 2,3-dihydroxicinnamic acid into 2-hydroxy-6-ketononadienedioate and 2-hydroxy-6-ketononatrienedioate, respectively. The protein is 2,3-dihydroxyphenylpropionate/2,3-dihydroxicinnamic acid 1,2-dioxygenase 1 of Pseudomonas putida (Arthrobacter siderocapsulatus).